Here is a 100-residue protein sequence, read N- to C-terminus: Urease subunit gamma (100 aa).

It belongs to the urease gamma subunit family. As to quaternary structure, heterotrimer of UreA (gamma), UreB (beta) and UreC (alpha) subunits. Three heterotrimers associate to form the active enzyme.

It localises to the cytoplasm. The enzyme catalyses urea + 2 H2O + H(+) = hydrogencarbonate + 2 NH4(+). It participates in nitrogen metabolism; urea degradation; CO(2) and NH(3) from urea (urease route): step 1/1. The polypeptide is Urease subunit gamma (Alkalilimnicola ehrlichii (strain ATCC BAA-1101 / DSM 17681 / MLHE-1)).